The sequence spans 210 residues: Protein-L-isoaspartate O-methyltransferase (210 aa).

S60 is a catalytic residue.

This sequence belongs to the methyltransferase superfamily. L-isoaspartyl/D-aspartyl protein methyltransferase family.

Its subcellular location is the cytoplasm. It catalyses the reaction [protein]-L-isoaspartate + S-adenosyl-L-methionine = [protein]-L-isoaspartate alpha-methyl ester + S-adenosyl-L-homocysteine. Functionally, catalyzes the methyl esterification of L-isoaspartyl residues in peptides and proteins that result from spontaneous decomposition of normal L-aspartyl and L-asparaginyl residues. It plays a role in the repair and/or degradation of damaged proteins. In Xylella fastidiosa (strain M12), this protein is Protein-L-isoaspartate O-methyltransferase.